A 254-amino-acid polypeptide reads, in one-letter code: Hydrolase tropI (254 aa).

Catalysis depends on residues C141, D187, and H219.

This sequence belongs to the dienelactone hydrolase family.

Its pathway is secondary metabolite biosynthesis. Hydrolase; part of the gene cluster that mediates the biosynthesis of the tropolone class of fungal maleic anhydrides. The pathway begins with the synthesis of 3-methylorcinaldehyde by the non-reducing polyketide synthase (PKS) tropA. 3-methylorcinaldehyde is the substrate for the FAD-dependent monooxygenase tropB to yield a dearomatized hydroxycyclohexadione. The 2-oxoglutarate-dependent dioxygenase tropC then performs the oxidative ring expansion to provide the first tropolone metabolite stipitaldehyde. Trop D converts stipitaldehyde into stipitacetal which is in turn converted to stipitalide by the short-chain dehydrogenase/reductase tropE. The next steps involve tropF, tropG, tropH, tropI and tropJ to form successive tropolone maleic anhydrides including stipitaldehydic, stipitatonic and stipitatic acids. The sequence is that of Hydrolase tropI from Talaromyces stipitatus (strain ATCC 10500 / CBS 375.48 / QM 6759 / NRRL 1006) (Penicillium stipitatum).